We begin with the raw amino-acid sequence, 126 residues long: Phosphoribosyl-AMP cyclohydrolase (126 aa).

Asp74 is a Mg(2+) binding site. Residue Cys75 participates in Zn(2+) binding. Positions 76 and 78 each coordinate Mg(2+). The Zn(2+) site is built by Cys92 and Cys99.

It belongs to the PRA-CH family. In terms of assembly, homodimer. It depends on Mg(2+) as a cofactor. Zn(2+) serves as cofactor.

It localises to the cytoplasm. It carries out the reaction 1-(5-phospho-beta-D-ribosyl)-5'-AMP + H2O = 1-(5-phospho-beta-D-ribosyl)-5-[(5-phospho-beta-D-ribosylamino)methylideneamino]imidazole-4-carboxamide. It functions in the pathway amino-acid biosynthesis; L-histidine biosynthesis; L-histidine from 5-phospho-alpha-D-ribose 1-diphosphate: step 3/9. Functionally, catalyzes the hydrolysis of the adenine ring of phosphoribosyl-AMP. The sequence is that of Phosphoribosyl-AMP cyclohydrolase from Geotalea daltonii (strain DSM 22248 / JCM 15807 / FRC-32) (Geobacter daltonii).